The following is a 1773-amino-acid chain: Zinc finger CCCH domain-containing protein 19 (1773 aa).

The tract at residues 145–166 (SGDRLEENKEVSMEEEPSSHEL) is disordered. Over residues 147–156 (DRLEENKEVS) the composition is skewed to basic and acidic residues. Residues 196-218 (GEEIESDLESKKEKVDVIEEETT) adopt a coiled-coil conformation. 3 disordered regions span residues 270-290 (IGEG…DVTE), 361-409 (DVDK…AGQT), and 434-591 (ISEM…KTVK). 2 stretches are compositionally biased toward basic and acidic residues: residues 273–286 (GAKD…KEGV) and 361–378 (DVDK…HVPE). A coiled-coil region spans residues 403 to 437 (AEEAGQTVDLEEIREENQELSKELAQVDETKISEM). Basic and acidic residues-rich tracts occupy residues 444 to 455 (MIKDEDQEKDDN) and 497 to 513 (KVDR…TDTR). Composition is skewed to acidic residues over residues 514–529 (IEDE…TDVA) and 551–572 (EEMT…EVEE). A compositionally biased stretch (basic residues) spans 578 to 588 (GGKRKRGRNTK). The Nuclear localization signal 1 motif lies at 581–588 (RKRGRNTK). The PHD-type zinc finger occupies 599–665 (EDVCFMCFDG…TYLCYTCMFS (67 aa)). The span at 741-751 (AKRPLKGHETN) shows a compositional bias: basic and acidic residues. The segment at 741–797 (AKRPLKGHETNASKQGTASETDYVTDGGSDSDSSPKKRKTRSRSKSGSAEKILSSGD) is disordered. Positions 752–762 (ASKQGTASETD) are enriched in polar residues. Residues 801–884 (SDETMEWASK…LNLLDSHFLK (84 aa)) form the SWIB/MDM2 domain. Residues 903 to 919 (PNHVDVDENLDHPVKSG) show a composition bias toward basic and acidic residues. The disordered stretch occupies residues 903 to 935 (PNHVDVDENLDHPVKSGKDKKRKTRKKNVRKGR). Basic residues predominate over residues 920–935 (KDKKRKTRKKNVRKGR). The Nuclear localization signal 2 signature appears at 921–928 (DKKRKTRK). The 133-residue stretch at 944–1076 (AVDMHNINLI…KAIALQEVRV (133 aa)) folds into the Plus3 domain. Basic and acidic residues predominate over residues 1139–1152 (EEIPEIHADPKMDP). Residues 1139-1274 (EEIPEIHADP…PETPARSSRA (136 aa)) are disordered. A compositionally biased stretch (acidic residues) spans 1153–1163 (DCESEDEDEKE). The span at 1193–1212 (FSSNESWTGTSNYSNTSANR) shows a compositional bias: polar residues. Serine 1281 carries the post-translational modification Phosphoserine. Residues 1307 to 1361 (EKIWHYKDPSGKVQGPFSMAQLRKWNNTGYFPAKLEIWKANESPLDSVLLTDALA) form the GYF domain. 4 stretches are compositionally biased toward polar residues: residues 1409-1433 (RNSQ…TTPT), 1441-1469 (SRWS…QSQT), 1499-1509 (VSVNHSATLHS), and 1518-1528 (SWGSMQTDHGG). Disordered stretches follow at residues 1409 to 1469 (RNSQ…QSQT), 1485 to 1605 (QPQT…SWGQ), and 1649 to 1746 (GQTQ…QQNN). Residues 1529 to 1555 (SNTPSSQNNSTSYGTPSPSVLPSQSQP) are compositionally biased toward low complexity. Polar residues predominate over residues 1569–1579 (SQPNAQAQAQW). Composition is skewed to low complexity over residues 1585 to 1602 (NNNQ…QNSS) and 1666 to 1677 (QSQSQSQVQAQA). Polar residues predominate over residues 1678-1708 (GTTGSGWMQPGQGIQSGNSNQNWGTQNQTAI). Over residues 1722–1735 (GNQQQSQNGDSGYG) the composition is skewed to low complexity. Residues 1737-1746 (NRQSGGQQNN) show a composition bias toward polar residues. The segment at 1747–1773 (FKGQRVCKFFRENGHCRKGASCNYLHN) adopts a C3H1-type zinc-finger fold.

As to quaternary structure, interacts with unmethylated histone H3 and AGO2. The interaction with AGO2 in required to direct DNA methylation and silencing. As to expression, expressed in seedlings, mostly in the vasculature and shoot apices of young seedlings.

It localises to the nucleus. Functionally, plays a central role in integrating RNA silencing and chromatin signals in 21 nt siRNA-dependent DNA methylation on cytosine pathway leading to transcriptional gene silencing of specific sequences. Involved in a chromatin-based RNA silencing pathway that encompasses both post-transcriptional gene silencing (PTGS) (e.g. RDR1, RDR6 and AGO2) and transcriptional gene silencing (TGS) (e.g. siRNA-dependent DNA methylation and histone H3) components. Mediates siRNA accumulation at specific chromatin loci. Binds H3K4me0 through its PHD to enforce low levels of H3K4 methylation and gene silencing at a subset of genomic loci. The chain is Zinc finger CCCH domain-containing protein 19 (NERD) from Arabidopsis thaliana (Mouse-ear cress).